We begin with the raw amino-acid sequence, 164 residues long: Deoxyuridine 5'-triphosphate nucleotidohydrolase (164 aa).

Residues 66-68 (RSG), Asn-79, 83-85 (TVD), and Lys-93 contribute to the substrate site.

Belongs to the dUTPase family. It depends on Mg(2+) as a cofactor.

It carries out the reaction dUTP + H2O = dUMP + diphosphate + H(+). It functions in the pathway pyrimidine metabolism; dUMP biosynthesis; dUMP from dCTP (dUTP route): step 2/2. In terms of biological role, this enzyme is involved in nucleotide metabolism: it produces dUMP, the immediate precursor of thymidine nucleotides and it decreases the intracellular concentration of dUTP so that uracil cannot be incorporated into DNA. The polypeptide is Deoxyuridine 5'-triphosphate nucleotidohydrolase (Rhodococcus erythropolis (strain PR4 / NBRC 100887)).